A 241-amino-acid polypeptide reads, in one-letter code: uncharacterized protein (241 aa).

This is an uncharacterized protein from Methanocaldococcus jannaschii (strain ATCC 43067 / DSM 2661 / JAL-1 / JCM 10045 / NBRC 100440) (Methanococcus jannaschii).